We begin with the raw amino-acid sequence, 316 residues long: Phosphate acetyltransferase (316 aa).

The protein belongs to the phosphate acetyltransferase and butyryltransferase family.

It is found in the cytoplasm. It carries out the reaction acetyl-CoA + phosphate = acetyl phosphate + CoA. It participates in metabolic intermediate biosynthesis; acetyl-CoA biosynthesis; acetyl-CoA from acetate: step 2/2. This chain is Phosphate acetyltransferase (pta), found in Rhizobium meliloti (Ensifer meliloti).